Consider the following 52-residue polypeptide: Large ribosomal subunit protein bL32c (52 aa).

Belongs to the bacterial ribosomal protein bL32 family.

Its subcellular location is the plastid. It localises to the chloroplast. This chain is Large ribosomal subunit protein bL32c, found in Nymphaea alba (White water-lily).